The sequence spans 296 residues: 4-hydroxybenzoate octaprenyltransferase (296 aa).

Helical transmembrane passes span 28 to 48 (IGTL…SDGI), 51 to 71 (LAVL…GCVI), 102 to 122 (LLLT…LNHL), 143 to 163 (FFPI…PMAF), 174 to 194 (AWIL…VYAM), 212 to 232 (FGRY…LLMA), 233 to 253 (VLGA…IVLL), and 274 to 294 (FLAN…HTFF).

Belongs to the UbiA prenyltransferase family. Requires Mg(2+) as cofactor.

The protein localises to the cell inner membrane. It catalyses the reaction all-trans-octaprenyl diphosphate + 4-hydroxybenzoate = 4-hydroxy-3-(all-trans-octaprenyl)benzoate + diphosphate. It functions in the pathway cofactor biosynthesis; ubiquinone biosynthesis. In terms of biological role, catalyzes the prenylation of para-hydroxybenzoate (PHB) with an all-trans polyprenyl group. Mediates the second step in the final reaction sequence of ubiquinone-8 (UQ-8) biosynthesis, which is the condensation of the polyisoprenoid side chain with PHB, generating the first membrane-bound Q intermediate 3-octaprenyl-4-hydroxybenzoate. This is 4-hydroxybenzoate octaprenyltransferase from Neisseria gonorrhoeae (strain NCCP11945).